A 152-amino-acid polypeptide reads, in one-letter code: MMKKIDVKILDPRIGKDFPLPTYATPGSAGLDLRACLDSAVELAPGETQLLPTGLAIHIADTDLAAVILPRSGLGHKHGVVLGNLVGLIDSDYQGQLMVSVWNRGQKSFTIEPGERIAQMVFVPVVQAEFNLVEEFDSSERGAGGFGHSGRH.

Substrate-binding positions include 71 to 73 (RSG), Asn84, 88 to 90 (LID), and Met98.

This sequence belongs to the dUTPase family. The cofactor is Mg(2+).

It carries out the reaction dUTP + H2O = dUMP + diphosphate + H(+). The protein operates within pyrimidine metabolism; dUMP biosynthesis; dUMP from dCTP (dUTP route): step 2/2. Its function is as follows. This enzyme is involved in nucleotide metabolism: it produces dUMP, the immediate precursor of thymidine nucleotides and it decreases the intracellular concentration of dUTP so that uracil cannot be incorporated into DNA. This Serratia proteamaculans (strain 568) protein is Deoxyuridine 5'-triphosphate nucleotidohydrolase.